Reading from the N-terminus, the 118-residue chain is Autophagy-related protein 8D (118 aa).

Residue glycine 118 is the site of Phosphatidylethanolamine amidated glycine attachment.

The protein belongs to the ATG8 family. As to quaternary structure, interacts with ATG4. Post-translationally, the C-terminal Gly is amidated with phosphatidylethanolamine by an activating system similar to that for ubiquitin.

Its subcellular location is the cytoplasmic vesicle. The protein localises to the autophagosome membrane. The protein resides in the vacuole membrane. It is found in the cytoplasm. It localises to the cytoskeleton. Its function is as follows. Ubiquitin-like modifier involved in autophagosomes formation. May mediate the delivery of the autophagosomes to the vacuole via the microtubule cytoskeleton. The chain is Autophagy-related protein 8D (ATG8D) from Oryza sativa subsp. japonica (Rice).